The primary structure comprises 556 residues: Formate--tetrahydrofolate ligase 1 (556 aa).

Residue 65 to 72 (TPAGEGKS) coordinates ATP.

Belongs to the formate--tetrahydrofolate ligase family.

The catalysed reaction is (6S)-5,6,7,8-tetrahydrofolate + formate + ATP = (6R)-10-formyltetrahydrofolate + ADP + phosphate. It functions in the pathway one-carbon metabolism; tetrahydrofolate interconversion. The protein is Formate--tetrahydrofolate ligase 1 of Streptococcus pyogenes serotype M4 (strain MGAS10750).